We begin with the raw amino-acid sequence, 395 residues long: S-adenosylmethionine synthase (395 aa).

His16 serves as a coordination point for ATP. Asp18 is a binding site for Mg(2+). Glu44 serves as a coordination point for K(+). 2 residues coordinate L-methionine: Glu57 and Gln100. Residues 100 to 110 form a flexible loop region; the sequence is QSPDIAQGVDD. ATP contacts are provided by residues 174 to 176, 241 to 242, Asp250, 256 to 257, Ala273, and Lys277; these read DAK, RF, and RK. Asp250 is an L-methionine binding site. Residue Lys281 participates in L-methionine binding.

This sequence belongs to the AdoMet synthase family. As to quaternary structure, homotetramer; dimer of dimers. Mg(2+) serves as cofactor. K(+) is required as a cofactor.

The protein resides in the cytoplasm. The catalysed reaction is L-methionine + ATP + H2O = S-adenosyl-L-methionine + phosphate + diphosphate. The protein operates within amino-acid biosynthesis; S-adenosyl-L-methionine biosynthesis; S-adenosyl-L-methionine from L-methionine: step 1/1. Its function is as follows. Catalyzes the formation of S-adenosylmethionine (AdoMet) from methionine and ATP. The overall synthetic reaction is composed of two sequential steps, AdoMet formation and the subsequent tripolyphosphate hydrolysis which occurs prior to release of AdoMet from the enzyme. This is S-adenosylmethionine synthase from Lactiplantibacillus plantarum (strain ATCC BAA-793 / NCIMB 8826 / WCFS1) (Lactobacillus plantarum).